The following is a 316-amino-acid chain: KRR1 small subunit processome component (316 aa).

The KH domain maps to Ala122–Lys192. A compositionally biased stretch (basic and acidic residues) spans Lys279–Ile304. A disordered region spans residues Lys279–Asn316.

Belongs to the KRR1 family. Component of the ribosomal small subunit (SSU) processome composed of at least 40 protein subunits and snoRNA U3. Interacts with snoRNA U3. Interacts with MPP10, KRI1 and with ribosomal proteins RPS1A, RPS4A, RPS4B, RPS8A, RPS8B, RPS11A, RPS11B, RPS13, RPS24, RPS25, RPL4A, RPL7B, RPL8, RPL23, RPL25 and RPL28.

Its subcellular location is the nucleus. It localises to the nucleolus. Functionally, required for 40S ribosome biogenesis. Involved in nucleolar processing of pre-18S ribosomal RNA and ribosome assembly. Essential for vegetative growth. This is KRR1 small subunit processome component from Saccharomyces cerevisiae (strain RM11-1a) (Baker's yeast).